Reading from the N-terminus, the 407-residue chain is Elongation factor Tu, chloroplastic (407 aa).

The tr-type G domain maps to 10 to 212; sequence KPHVNIGTIG…SVDNYIPAPE (203 aa). The G1 stretch occupies residues 19–26; that stretch reads GHVDHGKT. 19–26 lines the GTP pocket; that stretch reads GHVDHGKT. Mg(2+) is bound at residue threonine 26. A G2 region spans residues 59 to 63; it reads GITIN. The segment at 80-83 is G3; that stretch reads DCPG. GTP contacts are provided by residues 80–84 and 135–138; these read DCPGH and NKAD. The tract at residues 135–138 is G4; that stretch reads NKAD. The G5 stretch occupies residues 173 to 175; the sequence is SAL.

It belongs to the TRAFAC class translation factor GTPase superfamily. Classic translation factor GTPase family. EF-Tu/EF-1A subfamily.

The protein localises to the plastid. It is found in the chloroplast. It catalyses the reaction GTP + H2O = GDP + phosphate + H(+). Functionally, GTP hydrolase that promotes the GTP-dependent binding of aminoacyl-tRNA to the A-site of ribosomes during protein biosynthesis. The chain is Elongation factor Tu, chloroplastic (tufA) from Emiliania huxleyi (Coccolithophore).